We begin with the raw amino-acid sequence, 130 residues long: Small ribosomal subunit protein uS8 (130 aa).

Belongs to the universal ribosomal protein uS8 family. Part of the 30S ribosomal subunit.

Its function is as follows. One of the primary rRNA binding proteins, it binds directly to 16S rRNA central domain where it helps coordinate assembly of the platform of the 30S subunit. The polypeptide is Small ribosomal subunit protein uS8 (Thermococcus onnurineus (strain NA1)).